Consider the following 89-residue polypeptide: UPF0297 protein SMU_2079c (89 aa).

The protein belongs to the UPF0297 family.

In Streptococcus mutans serotype c (strain ATCC 700610 / UA159), this protein is UPF0297 protein SMU_2079c.